Reading from the N-terminus, the 328-residue chain is Methionyl-tRNA formyltransferase (328 aa).

Position 110–113 (110–113 (SLLP)) interacts with (6S)-5,6,7,8-tetrahydrofolate.

It belongs to the Fmt family.

It catalyses the reaction L-methionyl-tRNA(fMet) + (6R)-10-formyltetrahydrofolate = N-formyl-L-methionyl-tRNA(fMet) + (6S)-5,6,7,8-tetrahydrofolate + H(+). Functionally, attaches a formyl group to the free amino group of methionyl-tRNA(fMet). The formyl group appears to play a dual role in the initiator identity of N-formylmethionyl-tRNA by promoting its recognition by IF2 and preventing the misappropriation of this tRNA by the elongation apparatus. This chain is Methionyl-tRNA formyltransferase, found in Prochlorococcus marinus (strain AS9601).